Here is a 470-residue protein sequence, read N- to C-terminus: Uronate isomerase (470 aa).

It belongs to the metallo-dependent hydrolases superfamily. Uronate isomerase family.

The enzyme catalyses D-glucuronate = D-fructuronate. The catalysed reaction is aldehydo-D-galacturonate = keto-D-tagaturonate. It functions in the pathway carbohydrate metabolism; pentose and glucuronate interconversion. The polypeptide is Uronate isomerase (Salmonella arizonae (strain ATCC BAA-731 / CDC346-86 / RSK2980)).